The primary structure comprises 297 residues: MRPALSDYRHLASGKVRELYRIDDEHLLFVATDRISAYDHILSSEIPDKGRILTAMSVFFFDLIDAPNHLAGPPDDPRIPEEVLGRALVVRQLEMLPVECVARGYLTGSGLIDYRKTGTLCGLTLPPGLTEASKFAEPLYTPASKAELGLHDENIDFAATVDLVGEKRAAQLRERTLQIYTQGADHALTKGIIIADTKFEFGVDQSGELVLADEVFTPDSSRYWYADAYREGQVQPSYDKQFVRNWLTGPESGWDRAADQPPPPLPAEIVDATRSRYIEAYERISGLSFAEWIGASA.

It belongs to the SAICAR synthetase family.

The enzyme catalyses 5-amino-1-(5-phospho-D-ribosyl)imidazole-4-carboxylate + L-aspartate + ATP = (2S)-2-[5-amino-1-(5-phospho-beta-D-ribosyl)imidazole-4-carboxamido]succinate + ADP + phosphate + 2 H(+). Its pathway is purine metabolism; IMP biosynthesis via de novo pathway; 5-amino-1-(5-phospho-D-ribosyl)imidazole-4-carboxamide from 5-amino-1-(5-phospho-D-ribosyl)imidazole-4-carboxylate: step 1/2. The protein is Phosphoribosylaminoimidazole-succinocarboxamide synthase of Mycobacterium sp. (strain JLS).